The primary structure comprises 183 residues: Orotate phosphoribosyltransferase (183 aa).

5-phospho-alpha-D-ribose 1-diphosphate contacts are provided by residues Arg21, Lys88, and 112-120; that span reads EDVVTTGES. Residues Thr116 and Arg144 each coordinate orotate.

It belongs to the purine/pyrimidine phosphoribosyltransferase family. PyrE subfamily. In terms of assembly, homodimer. It depends on Mg(2+) as a cofactor.

It carries out the reaction orotidine 5'-phosphate + diphosphate = orotate + 5-phospho-alpha-D-ribose 1-diphosphate. It participates in pyrimidine metabolism; UMP biosynthesis via de novo pathway; UMP from orotate: step 1/2. Its function is as follows. Catalyzes the transfer of a ribosyl phosphate group from 5-phosphoribose 1-diphosphate to orotate, leading to the formation of orotidine monophosphate (OMP). This chain is Orotate phosphoribosyltransferase, found in Thermus thermophilus (strain ATCC BAA-163 / DSM 7039 / HB27).